Consider the following 635-residue polypeptide: Factor of DNA methylation 2 (635 aa).

Residues 289 to 471 (LDEKKNLHQA…ESMNSVLMTK (183 aa)) are a coiled coil. The span at 350-365 (ELERQKLDEDKRKSDA) shows a compositional bias: basic and acidic residues. The interval 350 to 376 (ELERQKLDEDKRKSDAMNKSLQLASRE) is disordered.

Forms a complex with IDN2 and FMD1/INDL1. Highly expressed in flowers and at lower levels in roots, leaves and stems.

In terms of biological role, forms a complex with IDN2 and FDM1/IDNL1 that is required for RNA-directed DNA methylation (RdDM) and that functions at a downstream step of the RdDM pathway. This Arabidopsis thaliana (Mouse-ear cress) protein is Factor of DNA methylation 2.